The chain runs to 359 residues: Histidinol-phosphate aminotransferase (359 aa).

The residue at position 217 (Lys217) is an N6-(pyridoxal phosphate)lysine.

It belongs to the class-II pyridoxal-phosphate-dependent aminotransferase family. Histidinol-phosphate aminotransferase subfamily. As to quaternary structure, homodimer. The cofactor is pyridoxal 5'-phosphate.

The enzyme catalyses L-histidinol phosphate + 2-oxoglutarate = 3-(imidazol-4-yl)-2-oxopropyl phosphate + L-glutamate. It functions in the pathway amino-acid biosynthesis; L-histidine biosynthesis; L-histidine from 5-phospho-alpha-D-ribose 1-diphosphate: step 7/9. This chain is Histidinol-phosphate aminotransferase, found in Salmonella choleraesuis (strain SC-B67).